The primary structure comprises 177 residues: ATP synthase subunit delta (177 aa).

This sequence belongs to the ATPase delta chain family. F-type ATPases have 2 components, F(1) - the catalytic core - and F(0) - the membrane proton channel. F(1) has five subunits: alpha(3), beta(3), gamma(1), delta(1), epsilon(1). F(0) has three main subunits: a(1), b(2) and c(10-14). The alpha and beta chains form an alternating ring which encloses part of the gamma chain. F(1) is attached to F(0) by a central stalk formed by the gamma and epsilon chains, while a peripheral stalk is formed by the delta and b chains.

The protein resides in the cell inner membrane. In terms of biological role, f(1)F(0) ATP synthase produces ATP from ADP in the presence of a proton or sodium gradient. F-type ATPases consist of two structural domains, F(1) containing the extramembraneous catalytic core and F(0) containing the membrane proton channel, linked together by a central stalk and a peripheral stalk. During catalysis, ATP synthesis in the catalytic domain of F(1) is coupled via a rotary mechanism of the central stalk subunits to proton translocation. Functionally, this protein is part of the stalk that links CF(0) to CF(1). It either transmits conformational changes from CF(0) to CF(1) or is implicated in proton conduction. This chain is ATP synthase subunit delta, found in Shewanella pealeana (strain ATCC 700345 / ANG-SQ1).